A 197-amino-acid polypeptide reads, in one-letter code: Glycerol-3-phosphate acyltransferase (197 aa).

5 helical membrane passes run 1-21, 78-98, 111-131, 136-155, and 159-176; these read MNIL…GFLI, LIEV…IWLG, MFLA…LIVL, FVSL…MFFY, and FIHT…LVIW.

It belongs to the PlsY family. In terms of assembly, probably interacts with PlsX.

Its subcellular location is the cell inner membrane. It carries out the reaction an acyl phosphate + sn-glycerol 3-phosphate = a 1-acyl-sn-glycero-3-phosphate + phosphate. The protein operates within lipid metabolism; phospholipid metabolism. Its function is as follows. Catalyzes the transfer of an acyl group from acyl-phosphate (acyl-PO(4)) to glycerol-3-phosphate (G3P) to form lysophosphatidic acid (LPA). This enzyme utilizes acyl-phosphate as fatty acyl donor, but not acyl-CoA or acyl-ACP. In Prochlorococcus marinus (strain MIT 9215), this protein is Glycerol-3-phosphate acyltransferase.